The primary structure comprises 417 residues: Biofilm dispersion protein BdlA (417 aa).

The 66-residue stretch at 1-66 (MAALDRSMAR…RRFWERLRRG (66 aa)) folds into the PAS 1 domain. The region spanning 67 to 114 (EHFSGRCKRITREGRPLWLEATYNPVRDGQGRLLKVVKYASDIDAIVH) is the PAC 1 domain. The PAS 2 domain maps to 115–188 (QEHEMQSKLD…ADLWRRLNRG (74 aa)). The region spanning 191–241 (VTGQFRRVHRNGQPVWLEASYNPVYDADGKLYKVVKFASDVSDRMRRYQAE) is the PAC 2 domain. Positions 242–417 (ADNAHQAHTL…QFSRTLNADL (176 aa)) constitute a Methyl-accepting transducer domain.

Essential for biofilm dispersion by sensing environmental cues. May be involved in sensing and transducing signals within cells, resulting in the modulation of c-di-GMP levels, swimming motility and adhesiveness of the bacterial cell surface. The chain is Biofilm dispersion protein BdlA (bdlA) from Pseudomonas aeruginosa (strain ATCC 15692 / DSM 22644 / CIP 104116 / JCM 14847 / LMG 12228 / 1C / PRS 101 / PAO1).